The following is a 130-amino-acid chain: Sirohydrochlorin cobaltochelatase (130 aa).

H12 (proton acceptor) is an active-site residue. H12 serves as a coordination point for Co(2+). A Ni(2+)-binding site is contributed by H12. Substrate contacts are provided by residues E48 and 73–78; that span reads LASGVH. H78 serves as a coordination point for Co(2+). Position 78 (H78) interacts with Ni(2+).

This sequence belongs to the CbiX family. CbiXS subfamily. Homotetramer; dimer of dimers.

It carries out the reaction Co-sirohydrochlorin + 2 H(+) = sirohydrochlorin + Co(2+). It catalyses the reaction Ni-sirohydrochlorin + 2 H(+) = sirohydrochlorin + Ni(2+). The protein operates within cofactor biosynthesis; adenosylcobalamin biosynthesis; cob(II)yrinate a,c-diamide from sirohydrochlorin (anaerobic route): step 1/10. Catalyzes the insertion of Co(2+) into sirohydrochlorin as part of the anaerobic pathway to cobalamin biosynthesis. Involved in the biosynthesis of the unique nickel-containing tetrapyrrole coenzyme F430, the prosthetic group of methyl-coenzyme M reductase (MCR), which plays a key role in methanogenesis and anaerobic methane oxidation. Catalyzes the insertion of Ni(2+) into sirohydrochlorin to yield Ni-sirohydrochlorin. In Methanosarcina barkeri (strain Fusaro / DSM 804), this protein is Sirohydrochlorin cobaltochelatase.